The chain runs to 362 residues: Putative membrane-bound acyltransferase YfiQ (362 aa).

The next 10 helical transmembrane spans lie at 11–31 (CISC…MLQA), 44–64 (FRTL…FLLA), 82–102 (VIFV…TSAM), 119–139 (VFLG…YMLH), 153–173 (WVLS…SAAS), 181–201 (GGAF…FCLA), 220–240 (WVVY…SYVG), 252–267 (IMLY…FHLF), 283–303 (YSFS…VLLL), and 308–328 (IPAV…PIMT).

Belongs to the acyltransferase 3 family.

It is found in the cell membrane. The polypeptide is Putative membrane-bound acyltransferase YfiQ (yfiQ) (Bacillus subtilis (strain 168)).